A 455-amino-acid chain; its full sequence is Nucleoside-triphosphatase (455 aa).

Catalysis depends on Glu168, which acts as the Proton acceptor.

It belongs to the GDA1/CD39 NTPase family.

It localises to the nucleus. The enzyme catalyses a ribonucleoside 5'-triphosphate + H2O = a ribonucleoside 5'-diphosphate + phosphate + H(+). Its function is as follows. Might be involved in RNA transport out of nuclei. In Pisum sativum (Garden pea), this protein is Nucleoside-triphosphatase.